An 867-amino-acid polypeptide reads, in one-letter code: Prominin-1 (867 aa).

The signal sequence occupies residues 1–19; that stretch reads MALVFSALLLLGLCGKISS. Residues 20 to 107 lie on the Extracellular side of the membrane; that stretch reads EGQPAFHNTP…VLALKIALYE (88 aa). A helical membrane pass occupies residues 108 to 128; it reads IGVLICAILGLLFIILMPLVG. At 129–158 the chain is on the cytoplasmic side; it reads CFFCMCRCCNKCGGEMHQRQKQNAPCRRKC. A helical membrane pass occupies residues 159-179; the sequence is LGLSLLVICLLMSLGIIYGFV. Residues 180–434 are Extracellular-facing; it reads ANQQTRTRIK…LPKLEEYDSY (255 aa). 3 positions are modified to N6-acetyllysine: Lys-226, Lys-258, and Lys-265. N-linked (GlcNAc...) asparagine glycosylation is found at Asn-273, Asn-291, Asn-332, Asn-374, and Asn-415. The chain crosses the membrane as a helical span at residues 435-455; sequence WWLGGLIVCFLLTLIVTFFFL. The Cytoplasmic portion of the chain corresponds to 456–487; that stretch reads GLLCGVFGYDKHATPTRRGCVSNTGGIFLMAG. The chain crosses the membrane as a helical span at residues 488-508; it reads VGFGFLFCWILMILVVLTFVV. Over 509–794 the chain is Extracellular; the sequence is GANVEKLLCE…LCGYVADPLN (286 aa). N-linked (GlcNAc...) asparagine glycosylation is found at Asn-554, Asn-581, and Asn-732. The helical transmembrane segment at 795–815 threads the bilayer; the sequence is LFWFGIGKATVLLLPAVIIAI. The Cytoplasmic segment spans residues 816–867; the sequence is KLAKYYRRMDSEDVYDDVETVPMKNLEIGSNGYHKDHLYGVHNPVMTSPSRY. Ser-865 carries the phosphoserine modification.

It belongs to the prominin family. As to quaternary structure, interacts with CDHR1 and with actin filaments. Interacts with NAT8 and NAT8B. Acetylation at Lys-226, Lys-258 and Lys-265 by NAT8 and NAT8B may control PROM1 protein expression and its function in cell apoptosis. In the submandibular gland, expressed on the apical side of epithelial cells. In the parotid gland, expressed in the intercalated ducts. In the sublingual gland, expressed in intercalated ducts. In the extraorbital lacrimal gland, expressed in the intercalated tubules and larger intralobular ducts. Expressed in the retina. Present in urine within small membrane particles (at protein level). In the embryo, expressed on the apical side of neuroepithelial cells and of other epithelia such as lung buds, gut and ureter buds. In the adult, expressed at the apical side of the kidney tubules and of the ependymal layer of the brain. Not expressed in gut, liver, lung, pituitary, adrenal, heart or spleen. Localized to the nascent disk membranes at the base of the rod outer segment in the retina (at protein level).

The protein localises to the apical cell membrane. It localises to the cell projection. Its subcellular location is the microvillus membrane. The protein resides in the cilium. It is found in the photoreceptor outer segment. The protein localises to the endoplasmic reticulum. It localises to the endoplasmic reticulum-Golgi intermediate compartment. In terms of biological role, may play a role in cell differentiation, proliferation and apoptosis. Binds cholesterol in cholesterol-containing plasma membrane microdomains and may play a role in the organization of the apical plasma membrane in epithelial cells. During early retinal development acts as a key regulator of disk morphogenesis. Involved in regulation of MAPK and Akt signaling pathways. In neuroblastoma cells suppresses cell differentiation such as neurite outgrowth in a RET-dependent manner. The protein is Prominin-1 (Prom1) of Mus musculus (Mouse).